We begin with the raw amino-acid sequence, 309 residues long: tRNA pseudouridine synthase B (309 aa).

Asp51 serves as the catalytic Nucleophile.

The protein belongs to the pseudouridine synthase TruB family. Type 1 subfamily.

It catalyses the reaction uridine(55) in tRNA = pseudouridine(55) in tRNA. Responsible for synthesis of pseudouridine from uracil-55 in the psi GC loop of transfer RNAs. This chain is tRNA pseudouridine synthase B, found in Coxiella burnetii (strain Dugway 5J108-111).